Reading from the N-terminus, the 853-residue chain is Cytochrome P450 monooxygenase mpaDE' (853 aa).

The Lumenal segment spans residues 1–6 (MESLSL). A helical membrane pass occupies residues 7–29 (TWITAIAVVLYLVQRYVRSYWRL). At 30-853 (KDIPGPVLAK…DIENAIEGQK (824 aa)) the chain is on the cytoplasmic side. Position 449 (Cys449) interacts with heme.

Belongs to the cytochrome P450 family. Heme serves as cofactor.

The protein localises to the endoplasmic reticulum membrane. The enzyme catalyses 5-methylorsellinate + reduced [NADPH--hemoprotein reductase] + O2 = 4,6-dihydroxy-2-(hydroxymethyl)-3-methylbenzoate + oxidized [NADPH--hemoprotein reductase] + H2O + H(+). The catalysed reaction is 4,6-dihydroxy-2-(hydroxymethyl)-3-methylbenzoate + H(+) = 5,7-dihydroxy-4-methylphthalide + H2O. Its pathway is secondary metabolite biosynthesis; terpenoid biosynthesis. Functionally, cytochrome P450 monooxygenase; part of the gene cluster that mediates the biosynthesis of mycophenolic acid (MPA), the first isolated antibiotic natural product in the world obtained from a culture of Penicillium brevicompactum in 1893. MpaDE' is an endoplasmic reticulum-bound enzyme that catalyzes the conversion of 5-methylorsellinic acid (5MOA) into the phthalide compound 5,7-dihydroxy-4,6-dimethylphthalide (DHMP). MpaDE' first catalyzes hydroxylation of 5-MOA to 4,6-dihydroxy-2-(hydroxymethyl)-3-methylbenzoic acid (DHMB), and then acts as a lactone synthase that catalyzes the ring closure to convert DHMB into DHMP. The first step of the pathway is the synthesis of 5-methylorsellinic acid (5MOA) by the cytosolic polyketide synthase mpaC. 5MOA is then converted to the phthalide compound 5,7-dihydroxy-4,6-dimethylphthalide (DHMP) by the endoplasmic reticulum-bound cytochrome P450 monooxygenase mpaDE. MpaDE first catalyzes hydroxylation of 5-MOA to 4,6-dihydroxy-2-(hydroxymethyl)-3-methylbenzoic acid (DHMB). MpaDE then acts as a lactone synthase that catalyzes the ring closure to convert DHMB into DHMP. The next step is the prenylation of DHMP by the Golgi apparatus-associated prenyltransferase mpaA to yield farnesyl-DHMP (FDHMP). The ER-bound oxygenase mpaB then mediates the oxidative cleavage the C19-C20 double bond in FDHMP to yield FDHMP-3C via a mycophenolic aldehyde intermediate. The O-methyltransferase mpaG catalyzes the methylation of FDHMP-3C to yield MFDHMP-3C. After the cytosolic methylation of FDHMP-3C, MFDHMP-3C enters into peroxisomes probably via free diffusion due to its low molecular weight. Upon a peroxisomal CoA ligation reaction, catalyzed by a beta-oxidation component enzyme acyl-CoA ligase ACL891, MFDHMP-3C-CoA would then be restricted to peroxisomes for the following beta-oxidation pathway steps. The peroxisomal beta-oxidation machinery than converts MFDHMP-3C-CoA into MPA_CoA, via a beta-oxidation chain-shortening process. Finally mpaH acts as a peroxisomal acyl-CoA hydrolase with high substrate specificity toward MPA-CoA to release the final product MPA. This chain is Cytochrome P450 monooxygenase mpaDE', found in Penicillium brevicompactum.